Here is a 449-residue protein sequence, read N- to C-terminus: MSARKYFGTDGIRGRVGQGVISADFVLRLGNALGRVLTQGRSKRPLVLIGKDTRISGYMFEAALEAGLVAAGADVQLIGPMPTPAIAFLTSTLRADAGVVISASHNPHYDNGIKFFSAEGEKLDDATEAAIEAALDEPFHTVESERLGKAIRTRDAIGRYIEFCKASVARGFTLHGLKMVLDCAHGATYHIAPMLFRELGAEVVVIGAAPDGLNINAGVGSTHIDNLAAKVRECGAHLGIAFDGDGDRVLMADDQGNPVDGDDLLYVLARSWQASGRLTGTVVGTLMTNYGLEQALAALHIPFQRAKVGDRYVHQALVEGGGTLGGETSGHLLCLDRASTGDGIVSALQVLEALGRDRQSLRDALTSLSKVPQKTVNVRLDGGAAKAIVEAANVQQALQQAQAAVRGRGRAFLRPSGTEPVVRVTVEADDAGLMQDTLDRLSGAVRDAA.

The Phosphoserine intermediate role is filled by serine 104. The Mg(2+) site is built by serine 104, aspartate 243, aspartate 245, and aspartate 247. Serine 104 is subject to Phosphoserine.

Belongs to the phosphohexose mutase family. The cofactor is Mg(2+). Post-translationally, activated by phosphorylation.

The enzyme catalyses alpha-D-glucosamine 1-phosphate = D-glucosamine 6-phosphate. Functionally, catalyzes the conversion of glucosamine-6-phosphate to glucosamine-1-phosphate. The chain is Phosphoglucosamine mutase from Xanthomonas axonopodis pv. citri (strain 306).